The following is a 747-amino-acid chain: MSKIESALQAAQPGLSRLRGGAGGMGYRAATTQAEQPRSSLLDTIGRFAKAGADMYTAKEQRARDLADERSNEIIRKLTPEQRREALNNGTLLYQDDPYAMEALRVKTGRNAAYLVDDDVMQKIKEGVFRTREEMEEYRHSRLQEGAKVYAEQFGIDPEDVDYQRGFNGDITERNISLYGAHDNFLSQQAQKGAIMNSRVELNGVLQDPDMLRRPDSADFFEKYIDNGLVTGAIPSDAQATQLISQAFSDASSRAGGADFLMRVGDKKVTLNGATTTYRELIGEEQWNALMVTAQRSQFETDAKLNEQYRLKINSALNQEDPRTAWEMLQGIKAELDKVQPDEQMTPQREWLISAQEQVQNQMNAWTKAQAKALDDSMKSMNKLDVIDKQFQKRINGEWVSTDFKDMPVNENTGEFKHSDMVNYANKKLAEIDSMDIPDGAKDAMKLKYLQADSKDGAFRTAIGTMVTDAGQEWSAAVINGKLPERTPAMDALRRIRNADPQLIAALYPDQAELFLTMDMMDKQGIDPQVILDADRLTVKRSKEQRFEDDKAFESALNASKAPEIARMPASLRESARKIYDSVKYRSGNESMAMEQMTKFLKESTYTFTGDDVDGDTVGVIPKNMMQVNSDPKSWEQGRDILEEARKGIIASNPWITNKQLTMYSQGDSIYLMDTTGQVRVRYDKELLSKVWSENQKKLEEKAREKALADVNKRAPIVAATKAREAAAKRVREKRKQTPKFIYGRKE.

Belongs to the T7virus internal virion protein gp15 family. Homooctamer. Interacts with gp16; after ejection the gp15-gp16 complex composed of a gp15 octamer and a gp16 tetramer probably binds both the viral DNA and the host inner membrane. Interacts with gp14.

It is found in the virion. It localises to the host periplasm. Functionally, component of the cylindrical core that assembles on the inner surface of the capsid during capsid formation and plays a role in viral DNA ejection into the host cell. The inner core is composed of stacked rings of gp14, gp15 and gp16 proteins. Following binding to the host cell surface, the internal core is disassembled and gp15 is ejected along with gp14 and gp16 into the infected cell. Gp15 probably remains associated with gp16. The gp15-gp16 complex binds to both the viral DNA and the host inner membrane, probably escorting the leading end of the genome through the periplasm and controlling the extend of DNA translocated into the host cell. The polypeptide is Internal virion protein gp15 (Escherichia phage T7 (Bacteriophage T7)).